Here is a 246-residue protein sequence, read N- to C-terminus: 3-deoxy-manno-octulosonate cytidylyltransferase (246 aa).

Belongs to the KdsB family.

The protein localises to the cytoplasm. It carries out the reaction 3-deoxy-alpha-D-manno-oct-2-ulosonate + CTP = CMP-3-deoxy-beta-D-manno-octulosonate + diphosphate. It participates in nucleotide-sugar biosynthesis; CMP-3-deoxy-D-manno-octulosonate biosynthesis; CMP-3-deoxy-D-manno-octulosonate from 3-deoxy-D-manno-octulosonate and CTP: step 1/1. The protein operates within bacterial outer membrane biogenesis; lipopolysaccharide biosynthesis. Its function is as follows. Activates KDO (a required 8-carbon sugar) for incorporation into bacterial lipopolysaccharide in Gram-negative bacteria. This is 3-deoxy-manno-octulosonate cytidylyltransferase from Bradyrhizobium sp. (strain BTAi1 / ATCC BAA-1182).